The chain runs to 428 residues: L-rhamnonate dehydratase (428 aa).

2 residues coordinate substrate: histidine 56 and arginine 82. 3 residues coordinate Mg(2+): aspartate 249, glutamate 275, and glutamate 303. Histidine 352 (proton acceptor) is an active-site residue. Glutamate 372 is a binding site for substrate.

The protein belongs to the mandelate racemase/muconate lactonizing enzyme family. RhamD subfamily. As to quaternary structure, homooctamer; tetramer of dimers. It depends on Mg(2+) as a cofactor.

It carries out the reaction L-rhamnonate = 2-dehydro-3-deoxy-L-rhamnonate + H2O. Functionally, catalyzes the dehydration of L-rhamnonate to 2-keto-3-deoxy-L-rhamnonate (KDR). The sequence is that of L-rhamnonate dehydratase from Shigella sonnei (strain Ss046).